A 599-amino-acid chain; its full sequence is Elongation factor 4 (599 aa).

A tr-type G domain is found at 5-187 (SHIRNFSIIA…RLVQSIPAPE (183 aa)). GTP-binding positions include 17–22 (DHGKST) and 134–137 (NKMD).

Belongs to the TRAFAC class translation factor GTPase superfamily. Classic translation factor GTPase family. LepA subfamily.

It is found in the cell inner membrane. The enzyme catalyses GTP + H2O = GDP + phosphate + H(+). Its function is as follows. Required for accurate and efficient protein synthesis under certain stress conditions. May act as a fidelity factor of the translation reaction, by catalyzing a one-codon backward translocation of tRNAs on improperly translocated ribosomes. Back-translocation proceeds from a post-translocation (POST) complex to a pre-translocation (PRE) complex, thus giving elongation factor G a second chance to translocate the tRNAs correctly. Binds to ribosomes in a GTP-dependent manner. This is Elongation factor 4 from Pseudomonas entomophila (strain L48).